Reading from the N-terminus, the 429-residue chain is Serine--tRNA ligase (429 aa).

Residue 235–237 coordinates L-serine; sequence TAE. Residue 266-268 participates in ATP binding; that stretch reads RSE. Residue Glu289 coordinates L-serine. An ATP-binding site is contributed by 353-356; it reads EISS. Ser389 contributes to the L-serine binding site.

Belongs to the class-II aminoacyl-tRNA synthetase family. Type-1 seryl-tRNA synthetase subfamily. As to quaternary structure, homodimer. The tRNA molecule binds across the dimer.

The protein resides in the cytoplasm. The catalysed reaction is tRNA(Ser) + L-serine + ATP = L-seryl-tRNA(Ser) + AMP + diphosphate + H(+). It catalyses the reaction tRNA(Sec) + L-serine + ATP = L-seryl-tRNA(Sec) + AMP + diphosphate + H(+). It functions in the pathway aminoacyl-tRNA biosynthesis; selenocysteinyl-tRNA(Sec) biosynthesis; L-seryl-tRNA(Sec) from L-serine and tRNA(Sec): step 1/1. Its function is as follows. Catalyzes the attachment of serine to tRNA(Ser). Is also able to aminoacylate tRNA(Sec) with serine, to form the misacylated tRNA L-seryl-tRNA(Sec), which will be further converted into selenocysteinyl-tRNA(Sec). This chain is Serine--tRNA ligase, found in Actinobacillus succinogenes (strain ATCC 55618 / DSM 22257 / CCUG 43843 / 130Z).